The primary structure comprises 412 residues: Transcription factor IIIA (412 aa).

The C2H2-type 1; degenerate zinc-finger motif lies at 20 to 43 (YLCQYCGISRSKNYLITKHIQSHH). 3 consecutive C2H2-type zinc fingers follow at residues 66-88 (HTCQECGAEFKKPAHLKQHMQSH), 94-118 (FTCYVDDCAASYRRKDHLNRHLLTH), and 123-148 (FKCPKENCKSEFSVQGNVGRHVKKYH). The interval 144–207 (VKKYHSNDNR…NGNGDSQPAE (64 aa)) is disordered. Positions 148 to 188 (HSNDNRDKDNTGLGDGDKDNTCKGDDDKEKSGSGGCEKENE) are enriched in basic and acidic residues. Residue K185 forms a Glycyl lysine isopeptide (Lys-Gly) (interchain with G-Cter in ubiquitin) linkage. The segment at 215 to 239 (VVCKEIGCGKAFKYPSQLQKHQDSH) adopts a C2H2-type 5 zinc-finger fold. The C2H2-type 6; degenerate zinc-finger motif lies at 247–272 (AFCSEPGCMKYFTNEECLKSHIRSCH). The segment at 275–296 (INCEICGSKHLKKNIKRHLRTH) adopts a C2H2-type 7; degenerate zinc-finger fold. The C2H2-type 8 zinc-finger motif lies at 305–330 (IKCEVEGCSSTFSKASNLQKHMKAVH). The segment at 336–362 (FVCGFPGCGMRFAYKHVRNKHENSGYH) adopts a C2H2-type 9; degenerate zinc-finger fold. The Nuclear localization signal signature appears at 384–391 (LKRKQVTA).

In terms of processing, protein product TFIIIA (44 kDa) is proteolytically cleaved into TFIIIA-C (34 kDa). Expressed in seedlings, flowers, siliques and seeds.

It is found in the nucleus. It localises to the nucleolus. In terms of biological role, essential protein. Isoform 1 is a transcription activator the binds both 5S rDNA and 5S rRNA and stimulates the transcription of 5S rRNA gene. Isoform 1 regulates 5S rRNA levels during development. This chain is Transcription factor IIIA, found in Arabidopsis thaliana (Mouse-ear cress).